A 1595-amino-acid polypeptide reads, in one-letter code: Collagen-like protein 2 (1595 aa).

Residues N87 and N134 are each glycosylated (N-linked (GlcNAc...) asparagine; by host). Collagen-like domains are found at residues 97–155 (LRGE…NGDV), 175–233 (QVGL…KGEG), 236–295 (GSKG…KGDI), and 299–358 (GIKG…KGMK). Residues 181–190 (SQGDQGYKGD) show a composition bias toward low complexity. 2 disordered regions span residues 181–577 (SQGD…SPDL) and 604–1326 (TDIK…GIKG). Composition is skewed to basic and acidic residues over residues 191–200 (QGSKGDKGQK), 209–448 (KGDK…KGTK), 456–466 (YKGDIGDKGIK), 474–501 (DKGD…DKGY), 510–561 (DNGE…DKGE), 606–615 (IKGEKGDKGE), 622–702 (KGDK…DKGD), 718–825 (KGDK…DKGI), 832–883 (KGDK…KGFK), 895–1041 (KGDK…DKGI), 1048–1098 (KGNK…DQGT), 1107–1151 (KGDK…KGIK), 1159–1250 (NKGD…KGDQ), and 1265–1300 (KGDK…DQGI). N274, N280, and N286 each carry an N-linked (GlcNAc...) asparagine; by host glycan. N-linked (GlcNAc...) asparagine; by host glycosylation is found at N373, N382, N400, and N409. Collagen-like domains follow at residues 380-559 (GDNG…KGDK), 608-907 (GEKG…KGEN), 920-1039 (GDKG…KGDK), 1043-1102 (GTNG…KGET), and 1128-1307 (GDQG…SGAS). Residues N1345, N1420, and N1545 are each glycosylated (N-linked (GlcNAc...) asparagine; by host). Residues 1538-1585 (SAFDKGGNGSIRFNPPSSGTKGSGGGGSVQGGGGTIPNDGYPGGNGGP) form a disordered region. Positions 1558-1585 (KGSGGGGSVQGGGGTIPNDGYPGGNGGP) are enriched in gly residues.

May be hydroxylated on lysine by the viral-encoded procollagen-lysine,2-oxoglutarate 5-dioxygenase.

It is found in the virion. Functionally, may participate in the formation of a layer of cross-linked glycosylated fibrils at the viral surface thus giving it a hairy-like appearance. This chain is Collagen-like protein 2, found in Acanthamoeba polyphaga (Amoeba).